Here is a 120-residue protein sequence, read N- to C-terminus: NAD(P)H-quinone oxidoreductase subunit 3 (120 aa).

The next 3 helical transmembrane spans lie at 6 to 26, 64 to 84, and 89 to 109; these read GYEYFLGFLLISGAVPILALT, MFALVFVIFDVETVFLYPWAV, and LGLLAFIEALVFITILVVALA.

This sequence belongs to the complex I subunit 3 family. NDH-1 can be composed of about 15 different subunits; different subcomplexes with different compositions have been identified which probably have different functions.

Its subcellular location is the cellular thylakoid membrane. It catalyses the reaction a plastoquinone + NADH + (n+1) H(+)(in) = a plastoquinol + NAD(+) + n H(+)(out). The catalysed reaction is a plastoquinone + NADPH + (n+1) H(+)(in) = a plastoquinol + NADP(+) + n H(+)(out). NDH-1 shuttles electrons from an unknown electron donor, via FMN and iron-sulfur (Fe-S) centers, to quinones in the respiratory and/or the photosynthetic chain. The immediate electron acceptor for the enzyme in this species is believed to be plastoquinone. Couples the redox reaction to proton translocation, and thus conserves the redox energy in a proton gradient. Cyanobacterial NDH-1 also plays a role in inorganic carbon-concentration. This Prochlorococcus marinus (strain NATL1A) protein is NAD(P)H-quinone oxidoreductase subunit 3.